A 94-amino-acid polypeptide reads, in one-letter code: Protein translocase subunit SecE (94 aa).

The disordered stretch occupies residues Met1 to Lys32. Residues Lys22–Lys32 are compositionally biased toward basic residues. Residues Thr65–Phe85 form a helical membrane-spanning segment.

This sequence belongs to the SecE/SEC61-gamma family. Component of the Sec protein translocase complex. Heterotrimer consisting of SecY, SecE and SecG subunits. The heterotrimers can form oligomers, although 1 heterotrimer is thought to be able to translocate proteins. Interacts with the ribosome. Interacts with SecDF, and other proteins may be involved. Interacts with SecA.

The protein resides in the cell membrane. Its function is as follows. Essential subunit of the Sec protein translocation channel SecYEG. Clamps together the 2 halves of SecY. May contact the channel plug during translocation. This is Protein translocase subunit SecE from Streptomyces coelicolor (strain ATCC BAA-471 / A3(2) / M145).